We begin with the raw amino-acid sequence, 144 residues long: Deoxyuridine 5'-triphosphate nucleotidohydrolase (144 aa).

Substrate-binding positions include 63-65 (RSG), N76, and 80-82 (TID).

The protein belongs to the dUTPase family. The cofactor is Mg(2+).

It catalyses the reaction dUTP + H2O = dUMP + diphosphate + H(+). The protein operates within pyrimidine metabolism; dUMP biosynthesis; dUMP from dCTP (dUTP route): step 2/2. Its function is as follows. This enzyme is involved in nucleotide metabolism: it produces dUMP, the immediate precursor of thymidine nucleotides and it decreases the intracellular concentration of dUTP so that uracil cannot be incorporated into DNA. This is Deoxyuridine 5'-triphosphate nucleotidohydrolase from Porphyromonas gingivalis (strain ATCC 33277 / DSM 20709 / CIP 103683 / JCM 12257 / NCTC 11834 / 2561).